The chain runs to 215 residues: uncharacterized protein (215 aa).

Catalysis depends on charge relay system residues Ser-114, Asp-162, and His-194.

This sequence belongs to the AB hydrolase superfamily. AB hydrolase 2 family.

This is an uncharacterized protein from Rickettsia typhi (strain ATCC VR-144 / Wilmington).